We begin with the raw amino-acid sequence, 486 residues long: Palmitoyltransferase pfa5 (486 aa).

The next 2 helical transmembrane spans lie at Ala12–Ile32 and Val54–Thr74. The disordered stretch occupies residues Ala94–Pro130. Basic residues predominate over residues Lys103–Ser121. In terms of domain architecture, DHHC spans Ile172 to Phe222. The next 2 membrane-spanning stretches (helical) occupy residues Phe217–Ile237 and Leu261–Thr281. Disordered stretches follow at residues Pro326–Pro357 and Lys433–Thr486. Over residues Ser447–Pro456 the composition is skewed to low complexity. Residues Arg460–Ser480 are compositionally biased toward basic residues.

It belongs to the DHHC palmitoyltransferase family. PFA5 subfamily. In terms of processing, autopalmitoylated.

The protein localises to the membrane. It catalyses the reaction L-cysteinyl-[protein] + hexadecanoyl-CoA = S-hexadecanoyl-L-cysteinyl-[protein] + CoA. The polypeptide is Palmitoyltransferase pfa5 (pfa5) (Emericella nidulans (strain FGSC A4 / ATCC 38163 / CBS 112.46 / NRRL 194 / M139) (Aspergillus nidulans)).